We begin with the raw amino-acid sequence, 118 residues long: Ribosome-binding factor A (118 aa).

Belongs to the RbfA family. As to quaternary structure, monomer. Binds 30S ribosomal subunits, but not 50S ribosomal subunits or 70S ribosomes.

It localises to the cytoplasm. Functionally, one of several proteins that assist in the late maturation steps of the functional core of the 30S ribosomal subunit. Associates with free 30S ribosomal subunits (but not with 30S subunits that are part of 70S ribosomes or polysomes). Required for efficient processing of 16S rRNA. May interact with the 5'-terminal helix region of 16S rRNA. The polypeptide is Ribosome-binding factor A (Bacillus cereus (strain B4264)).